The following is a 488-amino-acid chain: Ribosomal RNA small subunit methyltransferase F (488 aa).

S-adenosyl-L-methionine contacts are provided by residues A135–K141, E159, D186, and D204. C257 acts as the Nucleophile in catalysis.

The protein belongs to the class I-like SAM-binding methyltransferase superfamily. RsmB/NOP family.

It is found in the cytoplasm. The catalysed reaction is cytidine(1407) in 16S rRNA + S-adenosyl-L-methionine = 5-methylcytidine(1407) in 16S rRNA + S-adenosyl-L-homocysteine + H(+). In terms of biological role, specifically methylates the cytosine at position 1407 (m5C1407) of 16S rRNA. The sequence is that of Ribosomal RNA small subunit methyltransferase F from Shewanella pealeana (strain ATCC 700345 / ANG-SQ1).